A 274-amino-acid polypeptide reads, in one-letter code: UPF0173 metal-dependent hydrolase A2cp1_1196 (274 aa).

This sequence belongs to the UPF0173 family.

In Anaeromyxobacter dehalogenans (strain 2CP-1 / ATCC BAA-258), this protein is UPF0173 metal-dependent hydrolase A2cp1_1196.